The chain runs to 369 residues: Ribonuclease 3 (369 aa).

One can recognise an RNase III domain in the interval 6-142; that stretch reads IGFVQSSINY…IIGAVAADCD (137 aa). Mg(2+) is bound at residue Glu-46. Residue Asp-50 is part of the active site. Residues Asp-128 and Glu-131 each coordinate Mg(2+). Glu-131 is an active-site residue. In terms of domain architecture, DRBM spans 272-341; sequence NPASTLHELF…SLKLLKFIAK (70 aa).

Belongs to the ribonuclease III family. In terms of assembly, homodimer. Mg(2+) is required as a cofactor.

The protein resides in the cytoplasm. The enzyme catalyses Endonucleolytic cleavage to 5'-phosphomonoester.. Digests double-stranded RNA. Involved in the processing of primary rRNA transcript to yield the immediate precursors to the large and small rRNAs (23S and 16S). Processes some mRNAs, and tRNAs when they are encoded in the rRNA operon. Processes pre-crRNA and tracrRNA of type II CRISPR loci if present in the organism. The chain is Ribonuclease 3 (rnc) from Treponema succinifaciens (strain ATCC 33096 / DSM 2489 / 6091).